A 915-amino-acid chain; its full sequence is Rab3 GTPase-activating protein catalytic subunit (915 aa).

This sequence belongs to the Rab3-GAP catalytic subunit family. The Rab3 GTPase-activating complex is a heterodimer composed of rbg-1 and rbg-2.

It localises to the cytoplasm. Its function is as follows. Probable catalytic subunit of a GTPase activating protein that has specificity for Rab3 subfamily. Rab3 proteins are involved in regulated exocytosis of neurotransmitters and hormones. Specifically converts active Rab3-GTP to the inactive form Rab3-GDP. The protein is Rab3 GTPase-activating protein catalytic subunit (rbg-1) of Caenorhabditis elegans.